We begin with the raw amino-acid sequence, 536 residues long: GATA zinc finger domain-containing protein 9 (536 aa).

Polar residues-rich tracts occupy residues 1–20 and 36–55; these read MTSFLLFNPGSLQQQQQPHS and CQSSFSTPLGGSNGINNPNA. Disordered regions lie at residues 1-77, 183-211, 237-258, 273-342, and 370-423; these read MTSF…LSGS, SSSLSSEDDDCCYETEEDDNGEDGEVVRS, RSAFKKNKKDYHHGSSAGGGGS, QLHY…GFVQ, and ALFS…NISS. A compositionally biased stretch (low complexity) spans 56–72; that stretch reads TTNNTTTTTTTTTTTTN. Acidic residues predominate over residues 188-206; the sequence is SEDDDCCYETEEDDNGEDG. Residues 237-247 are compositionally biased toward basic residues; sequence RSAFKKNKKDY. A compositionally biased stretch (polar residues) spans 273–283; sequence QLHYSNSMTDN. 2 stretches are compositionally biased toward low complexity: residues 318-335 and 379-399; these read SNSNNNNNNNNNNNNNNN and PSPTLGSSCGSSSPGLNNSGN. Residues 479–504 form a GATA-type zinc finger; that stretch reads CRHCGTTDTPEWRRGPDGRKSLCNAC.

The polypeptide is GATA zinc finger domain-containing protein 9 (gtaI) (Dictyostelium discoideum (Social amoeba)).